The sequence spans 218 residues: tRNA (guanine-N(7)-)-methyltransferase (218 aa).

Residues Glu46, Glu71, Asp98, and Asp120 each coordinate S-adenosyl-L-methionine. The active site involves Asp120. Lys124 contributes to the substrate binding site. The tract at residues 126–131 is interaction with RNA; it reads RHEKRR. Substrate-binding positions include Asp156 and 196–199; that span reads TEYE.

This sequence belongs to the class I-like SAM-binding methyltransferase superfamily. TrmB family.

It catalyses the reaction guanosine(46) in tRNA + S-adenosyl-L-methionine = N(7)-methylguanosine(46) in tRNA + S-adenosyl-L-homocysteine. It functions in the pathway tRNA modification; N(7)-methylguanine-tRNA biosynthesis. Catalyzes the formation of N(7)-methylguanine at position 46 (m7G46) in tRNA. This is tRNA (guanine-N(7)-)-methyltransferase from Lactobacillus johnsonii (strain CNCM I-12250 / La1 / NCC 533).